Consider the following 1337-residue polypeptide: C-Jun-amino-terminal kinase-interacting protein 3 (1337 aa).

The RH1 domain maps to 12–100 (VVVYQDDYCS…LTQYEREKAL (89 aa)). The tract at residues 50–80 (EVVKELMPLVVNVLENLDSVLSENQEHEVEL) is kinesin-binding domain (KBD); essential for its function in axon elongation. Positions 58–177 (LVVNVLENLD…HTEMIQTYVE (120 aa)) form a coiled coil. Disordered regions lie at residues 183-211 (KMQQ…SLNV) and 245-285 (SSSY…PSAA). Residues 184–198 (MQQVGGSGQTESSLP) show a composition bias toward polar residues. Residues 210–226 (NVFPLADGMVRAQMGGK) form a JNK-binding domain (JBD); essential for its function in axon elongation region. A compositionally biased stretch (low complexity) spans 261–270 (SSAAATPSTT). A phosphothreonine; by MAPK mark is found at threonine 266, threonine 276, and threonine 287. Over residues 271-282 (GTKSNTPTSSVP) the composition is skewed to polar residues. 2 positions are modified to phosphoserine; by ROCK1: serine 315 and serine 365. A Phosphoserine modification is found at serine 366. Residues 424 to 459 (LLLENSQLLETKNALNVVKNDLIAKVDQLSGEQEVL) form a leucine zipper-like domain (LZ); essential for its function in axon elongation region. Residues 437-555 (ALNVVKNDLI…LQEAVRWTEM (119 aa)) adopt a coiled-coil conformation. The segment at 459-515 (LKGELEAAKQAKVKLENRIKELEEELKRVKSEAVTARREPREEVEDVSSYLCTELDK) is interaction with NTRK2. The 75-residue stretch at 521 to 595 (RRRFTRVEMA…SPPPAKRSYP (75 aa)) folds into the RH2 domain. The residue at position 603 (serine 603) is a Phosphoserine. The disordered stretch occupies residues 633-655 (DDCTSSARREQKREQYRQVREHV). Residues 639-655 (ARREQKREQYRQVREHV) show a composition bias toward basic and acidic residues. Serine 677 is modified (phosphoserine). Disordered regions lie at residues 719 to 772 (WKPH…ATSS) and 859 to 966 (PRSN…TTTS). The segment covering 739–765 (LTCDREGEGEPKSTHPSPEKKKAKETP) has biased composition (basic and acidic residues). 2 stretches are compositionally biased toward polar residues: residues 879–892 (VATT…PSQS) and 941–952 (ENGSESNGTIVQ).

The protein belongs to the JIP scaffold family. In terms of assembly, forms homo- or heterooligomeric complexes. The central region of MAPK8IP3 interacts with the C-terminal of MAPK8IP2 but not MAPK8IP1. Binds specific components of the JNK signaling pathway namely MAPK8/JNK1, MAPK9/JNK2 and MAPK10/JNK3 to the N-terminal region, MAP2K4/MKK4 and MAP2K7/MKK7 to the central region and MAP3K11 to the C-terminal region. Binds the TPR motif-containing C-terminal of kinesin light chain, KLC1. Pre-assembled MAPK8IP1 scaffolding complexes are then transported as a cargo of kinesin, to the required subcellular location. Interacts with ROCK1 and this interaction is enhanced by ultraviolet-B (UVB) radiation. Interacts with SH3RF2. Interacts with NTRK2/TRKB and NTRK3/TRKC. Post-translationally, phosphorylation by ROCK1 is crucial for the recruitment of JNK. As to expression, highly expressed throughout many regions of the brain and at lower levels in the heart, liver, lung, testes and kidney. All isoforms have been identified in the brain, isoform 1a is also expressed in the spleen and lung.

Its subcellular location is the cytoplasm. The protein resides in the golgi apparatus. It is found in the cytoplasmic vesicle. The protein localises to the cell projection. It localises to the growth cone. Its subcellular location is the axon. The protein resides in the dendrite. It is found in the perinuclear region. In terms of biological role, the JNK-interacting protein (JIP) group of scaffold proteins selectively mediates JNK signaling by aggregating specific components of the MAPK cascade to form a functional JNK signaling module. May function as a regulator of vesicle transport, through interactions with the JNK-signaling components and motor proteins. Promotes neuronal axon elongation in a kinesin- and JNK-dependent manner. Activates cofilin at axon tips via local activation of JNK, thereby regulating filopodial dynamics and enhancing axon elongation. Its binding to kinesin heavy chains (KHC), promotes kinesin-1 motility along microtubules and is essential for axon elongation and regeneration. Regulates cortical neuronal migration by mediating NTRK2/TRKB anterograde axonal transport during brain development. Acts as an adapter that bridges the interaction between NTRK2/TRKB and KLC1 and drives NTRK2/TRKB axonal but not dendritic anterograde transport, which is essential for subsequent BDNF-triggered signaling and filopodia formation. This is C-Jun-amino-terminal kinase-interacting protein 3 (Mapk8ip3) from Mus musculus (Mouse).